Reading from the N-terminus, the 183-residue chain is MTFGHCRRASTLRSAFVLGLCGLLLAGCSGADDDRDAAALKDKYVTVNLGVRGPVDLPADGVGNLQTFSPQQIYAGKKLFESNCQNCHVGGTTTPNPKVSLALAKLQGATPPRDNIQSLVQYMRLPMSYDGSEETFNCRKSDWIEDDEAQNLAAFILRASQKARGWGTARLEANQDSMTTAPP.

Residues 1 to 31 (MTFGHCRRASTLRSAFVLGLCGLLLAGCSGA) form the signal peptide. Heme c-binding residues include Cys84, Cys87, His88, and Cys138.

It belongs to the cytochrome c family. PsbV subfamily. PSII is composed of 1 copy each of membrane proteins PsbA, PsbB, PsbC, PsbD, PsbE, PsbF, PsbH, PsbI, PsbJ, PsbK, PsbL, PsbM, PsbT, PsbX, Psb30/Ycf12, peripheral proteins PsbO, CyanoQ (PsbQ), PsbU, PsbV and a large number of cofactors. It forms dimeric complexes. Requires heme c as cofactor.

Its subcellular location is the cell inner membrane. In terms of biological role, probably one of the extrinsic, lumenal subunits of photosystem II (PSII). PSII is a light-driven water plastoquinone oxidoreductase, using light energy to abstract electrons from H(2)O, generating a proton gradient subsequently used for ATP formation. The extrinsic proteins stabilize the structure of photosystem II oxygen-evolving complex (OEC), the ion environment of oxygen evolution and protect the OEC against heat-induced inactivation. Low-potential cytochrome c that plays a role in the OEC of PSII. This is Photosystem II extrinsic protein V (psbV1) from Gloeobacter violaceus (strain ATCC 29082 / PCC 7421).